The chain runs to 106 residues: Small ribosomal subunit protein uS10 (106 aa).

It belongs to the universal ribosomal protein uS10 family. Part of the 30S ribosomal subunit.

Functionally, involved in the binding of tRNA to the ribosomes. The polypeptide is Small ribosomal subunit protein uS10 (Mesomycoplasma hyopneumoniae (strain 232) (Mycoplasma hyopneumoniae)).